A 123-amino-acid chain; its full sequence is MIQEQTMLTVADNSGARRVMCIKVLGGSHRRYAGIGDVIKITIKEAIPRGKVKKGDVLKAVVVRTKKGVRRPDGSVIRFDGNACVILNNNSEQPIGTRIFGPVTRELRNEKFMKIISLAPEVL.

This sequence belongs to the universal ribosomal protein uL14 family. In terms of assembly, part of the 50S ribosomal subunit. Forms a cluster with proteins L3 and L19. In the 70S ribosome, L14 and L19 interact and together make contacts with the 16S rRNA in bridges B5 and B8.

In terms of biological role, binds to 23S rRNA. Forms part of two intersubunit bridges in the 70S ribosome. In Serratia proteamaculans (strain 568), this protein is Large ribosomal subunit protein uL14.